The sequence spans 352 residues: Chorismate synthase (352 aa).

R48 and R54 together coordinate NADP(+). FMN contacts are provided by residues 125 to 127 (RAS), 238 to 239 (NA), A278, 293 to 297 (KPASS), and R319.

Belongs to the chorismate synthase family. In terms of assembly, homotetramer. The cofactor is FMNH2.

The enzyme catalyses 5-O-(1-carboxyvinyl)-3-phosphoshikimate = chorismate + phosphate. Its pathway is metabolic intermediate biosynthesis; chorismate biosynthesis; chorismate from D-erythrose 4-phosphate and phosphoenolpyruvate: step 7/7. Catalyzes the anti-1,4-elimination of the C-3 phosphate and the C-6 proR hydrogen from 5-enolpyruvylshikimate-3-phosphate (EPSP) to yield chorismate, which is the branch point compound that serves as the starting substrate for the three terminal pathways of aromatic amino acid biosynthesis. This reaction introduces a second double bond into the aromatic ring system. This Coxiella burnetii (strain RSA 493 / Nine Mile phase I) protein is Chorismate synthase.